A 178-amino-acid polypeptide reads, in one-letter code: MTTDDLKRLVRTVPDFPSPGILFRDITTLIAHGEGLSACIDHLAHKARAAGAQAVAGMEARGFIFGAAVAARMGLGFIPVRKPGKLPVKTIGIDYALEYGRDRLEIDPTAIREGQRVVIVDDLIATGGTALAAAELLRMAGAHVTHALFVIDLPELHGAERLRGAGLTVEALMDFPGH.

The protein belongs to the purine/pyrimidine phosphoribosyltransferase family. As to quaternary structure, homodimer.

Its subcellular location is the cytoplasm. The catalysed reaction is AMP + diphosphate = 5-phospho-alpha-D-ribose 1-diphosphate + adenine. Its pathway is purine metabolism; AMP biosynthesis via salvage pathway; AMP from adenine: step 1/1. Catalyzes a salvage reaction resulting in the formation of AMP, that is energically less costly than de novo synthesis. In Novosphingobium aromaticivorans (strain ATCC 700278 / DSM 12444 / CCUG 56034 / CIP 105152 / NBRC 16084 / F199), this protein is Adenine phosphoribosyltransferase.